The chain runs to 293 residues: 33 kDa chaperonin (293 aa).

2 disulfide bridges follow: C235-C237 and C267-C270.

The protein belongs to the HSP33 family. Post-translationally, under oxidizing conditions two disulfide bonds are formed involving the reactive cysteines. Under reducing conditions zinc is bound to the reactive cysteines and the protein is inactive.

The protein localises to the cytoplasm. Redox regulated molecular chaperone. Protects both thermally unfolding and oxidatively damaged proteins from irreversible aggregation. Plays an important role in the bacterial defense system toward oxidative stress. The chain is 33 kDa chaperonin from Deinococcus radiodurans (strain ATCC 13939 / DSM 20539 / JCM 16871 / CCUG 27074 / LMG 4051 / NBRC 15346 / NCIMB 9279 / VKM B-1422 / R1).